We begin with the raw amino-acid sequence, 84 residues long: Large ribosomal subunit protein bL27 (84 aa).

The tract at residues 1-27 (MAHKKGQGASRNGRDSKSKRLGVKVGA) is disordered.

Belongs to the bacterial ribosomal protein bL27 family.

The polypeptide is Large ribosomal subunit protein bL27 (Chlamydia pneumoniae (Chlamydophila pneumoniae)).